We begin with the raw amino-acid sequence, 758 residues long: 5-methyltetrahydropteroyltriglutamate--homocysteine methyltransferase (758 aa).

5-methyltetrahydropteroyltri-L-glutamate contacts are provided by residues 16 to 19 (RELK) and lysine 116. Residues 436-438 (IGS) and glutamate 489 each bind L-homocysteine. L-methionine is bound by residues 436-438 (IGS) and glutamate 489. 5-methyltetrahydropteroyltri-L-glutamate-binding positions include 520–521 (RC) and tryptophan 566. Aspartate 604 is an L-homocysteine binding site. Aspartate 604 serves as a coordination point for L-methionine. Position 610 (glutamate 610) interacts with 5-methyltetrahydropteroyltri-L-glutamate. Residues histidine 646, cysteine 648, and glutamate 670 each contribute to the Zn(2+) site. The Proton donor role is filled by histidine 699. Cysteine 731 contacts Zn(2+).

This sequence belongs to the vitamin-B12 independent methionine synthase family. Zn(2+) serves as cofactor.

It carries out the reaction 5-methyltetrahydropteroyltri-L-glutamate + L-homocysteine = tetrahydropteroyltri-L-glutamate + L-methionine. It functions in the pathway amino-acid biosynthesis; L-methionine biosynthesis via de novo pathway; L-methionine from L-homocysteine (MetE route): step 1/1. Catalyzes the transfer of a methyl group from 5-methyltetrahydrofolate to homocysteine resulting in methionine formation. The sequence is that of 5-methyltetrahydropteroyltriglutamate--homocysteine methyltransferase from Nitrosococcus oceani (strain ATCC 19707 / BCRC 17464 / JCM 30415 / NCIMB 11848 / C-107).